The chain runs to 362 residues: Carbamoyl phosphate synthase small chain (362 aa).

The tract at residues 1–169 is CPSase; it reads MGKRLLILED…TKTAYPAPGV (169 aa). L-glutamine is bound by residues serine 46, glycine 220, and glycine 222. The 187-residue stretch at 172–358 folds into the Glutamine amidotransferase type-1 domain; the sequence is NIVLVDFGLK…LELIDAFQLE (187 aa). The active-site Nucleophile is cysteine 247. L-glutamine contacts are provided by methionine 248, glutamine 251, asparagine 289, glycine 291, and tyrosine 292. Catalysis depends on residues histidine 331 and aspartate 333.

It belongs to the CarA family. As to quaternary structure, composed of two chains; the small (or glutamine) chain promotes the hydrolysis of glutamine to ammonia, which is used by the large (or ammonia) chain to synthesize carbamoyl phosphate. Tetramer of heterodimers (alpha,beta)4.

The catalysed reaction is hydrogencarbonate + L-glutamine + 2 ATP + H2O = carbamoyl phosphate + L-glutamate + 2 ADP + phosphate + 2 H(+). It carries out the reaction L-glutamine + H2O = L-glutamate + NH4(+). The protein operates within amino-acid biosynthesis; L-arginine biosynthesis; carbamoyl phosphate from bicarbonate: step 1/1. Its pathway is pyrimidine metabolism; UMP biosynthesis via de novo pathway; (S)-dihydroorotate from bicarbonate: step 1/3. Its function is as follows. Small subunit of the glutamine-dependent carbamoyl phosphate synthetase (CPSase). CPSase catalyzes the formation of carbamoyl phosphate from the ammonia moiety of glutamine, carbonate, and phosphate donated by ATP, constituting the first step of 2 biosynthetic pathways, one leading to arginine and/or urea and the other to pyrimidine nucleotides. The small subunit (glutamine amidotransferase) binds and cleaves glutamine to supply the large subunit with the substrate ammonia. This Streptococcus mutans serotype c (strain ATCC 700610 / UA159) protein is Carbamoyl phosphate synthase small chain.